The sequence spans 413 residues: Histidine--tRNA ligase (413 aa).

The protein belongs to the class-II aminoacyl-tRNA synthetase family. In terms of assembly, homodimer.

Its subcellular location is the cytoplasm. It carries out the reaction tRNA(His) + L-histidine + ATP = L-histidyl-tRNA(His) + AMP + diphosphate + H(+). In Fusobacterium nucleatum subsp. nucleatum (strain ATCC 25586 / DSM 15643 / BCRC 10681 / CIP 101130 / JCM 8532 / KCTC 2640 / LMG 13131 / VPI 4355), this protein is Histidine--tRNA ligase.